We begin with the raw amino-acid sequence, 80 residues long: U6 snRNA-associated Sm-like protein LSm6 (80 aa).

A Sm domain is found at Thr-7 to Arg-79. N6-acetyllysine is present on Lys-59.

The protein belongs to the snRNP Sm proteins family. SmF/LSm6 subfamily. Component of the precatalytic spliceosome (spliceosome B complex). Component of the U4/U6-U5 tri-snRNP complex, a building block of the precatalytic spliceosome (spliceosome B complex). The U4/U6-U5 tri-snRNP complex is composed of the U4, U6 and U5 snRNAs and at least PRPF3, PRPF4, PRPF6, PRPF8, PRPF31, SNRNP200, TXNL4A, SNRNP40, SNRPB, SNRPD1, SNRPD2, SNRPD3, SNRPE, SNRPF, SNRPG, DDX23, CD2BP2, PPIH, SNU13, EFTUD2, SART1 and USP39, plus LSM2, LSM3, LSM4, LSM5, LSM6, LSM7 and LSM8. LSM2, LSM3, LSM4, LSM5, LSM6, LSM7 and LSM8 form a heptameric, ring-shaped subcomplex (the LSM2-8 complex) that is part of the U4/U6-U5 tri-snRNP complex and the precatalytic spliceosome. Component of the heptameric LSM1-LSM7 complex, which consists of LSM1, LSM2, LSM3, LSM4, LSM5, LSM6 and LSM7.

The protein localises to the cytoplasm. It localises to the nucleus. Plays a role in pre-mRNA splicing as component of the U4/U6-U5 tri-snRNP complex that is involved in spliceosome assembly, and as component of the precatalytic spliceosome (spliceosome B complex). The heptameric LSM2-8 complex binds specifically to the 3'-terminal U-tract of U6 snRNA. Component of LSm protein complexes, which are involved in RNA processing and may function in a chaperone-like manner, facilitating the efficient association of RNA processing factors with their substrates. Component of the cytoplasmic LSM1-LSM7 complex, which is thought to be involved in mRNA degradation by activating the decapping step in the 5'-to-3' mRNA decay pathway. The protein is U6 snRNA-associated Sm-like protein LSm6 (LSM6) of Homo sapiens (Human).